A 473-amino-acid chain; its full sequence is Fumarate hydratase class II 2 (473 aa).

The disordered stretch occupies residues 1-28; the sequence is MAKSARTKTARPATRTETDSFGPIEVPS. Substrate contacts are provided by residues 108-110, 139-142, 149-151, and Thr197; these read SGT, HPND, and SSN. His198 (proton donor/acceptor) is an active-site residue. The active site involves Ser328. Substrate contacts are provided by residues Ser329 and 334–336; that span reads KVN.

This sequence belongs to the class-II fumarase/aspartase family. Fumarase subfamily. As to quaternary structure, homotetramer.

The protein resides in the cytoplasm. The catalysed reaction is (S)-malate = fumarate + H2O. Its pathway is carbohydrate metabolism; tricarboxylic acid cycle; (S)-malate from fumarate: step 1/1. Involved in the TCA cycle. Catalyzes the stereospecific interconversion of fumarate to L-malate. This chain is Fumarate hydratase class II 2, found in Bradyrhizobium diazoefficiens (strain JCM 10833 / BCRC 13528 / IAM 13628 / NBRC 14792 / USDA 110).